The following is a 198-amino-acid chain: Prostamide/prostaglandin F synthase (198 aa).

Y108 bears the Phosphotyrosine mark.

Belongs to the peroxiredoxin-like PRXL2 family. Prostamide/prostaglandin F synthase subfamily.

It localises to the cytoplasm. The protein resides in the cytosol. It carries out the reaction prostaglandin H2 + [thioredoxin]-dithiol = prostaglandin F2alpha + [thioredoxin]-disulfide. The enzyme catalyses prostamide F2alpha + [thioredoxin]-disulfide = prostamide H2 + [thioredoxin]-dithiol. Its function is as follows. Catalyzes the reduction of prostaglandin-ethanolamide H(2) (prostamide H(2)) to prostamide F(2alpha) with NADPH as proton donor. Also able to reduce prostaglandin H(2) to prostaglandin F(2alpha). This Homo sapiens (Human) protein is Prostamide/prostaglandin F synthase.